Consider the following 189-residue polypeptide: Ribonuclease M5 2 (189 aa).

The region spanning 8–91 (SQVIVAEGRD…VFLKRDEAVP (84 aa)) is the Toprim domain. Mg(2+) is bound by residues Glu14, Asp60, and Asp62.

Belongs to the ribonuclease M5 family. The cofactor is Mg(2+).

The protein localises to the cytoplasm. The enzyme catalyses Endonucleolytic cleavage of RNA, removing 21 and 42 nucleotides, respectively, from the 5'- and 3'-termini of a 5S-rRNA precursor.. In terms of biological role, required for correct processing of both the 5' and 3' ends of 5S rRNA precursor. Cleaves both sides of a double-stranded region yielding mature 5S rRNA in one step. This chain is Ribonuclease M5 2, found in Ligilactobacillus salivarius (strain UCC118) (Lactobacillus salivarius).